Consider the following 786-residue polypeptide: Tyrosine-protein kinase Btk (786 aa).

Residues 1–23 (MMGTKHRNSHVNGSIKSSSSLRS) form a disordered region. Low complexity predominate over residues 14–23 (SIKSSSSLRS). A PH domain is found at 41-184 (DVVKSGSMVK…WIRAIRQVCE (144 aa)). A Btk-type zinc finger spans residues 187–223 (NTPKSYRYHPGLWSGKKWSCCKGLSRTTFGCRAAAHW). 4 residues coordinate Zn(2+): His-195, Cys-206, Cys-207, and Cys-217. Low complexity predominate over residues 226 to 240 (ANNNPSNGSSPAQNS). The disordered stretch occupies residues 226–301 (ANNNPSNGSS…TPTSLQPQSS (76 aa)). A compositionally biased stretch (polar residues) spans 241–260 (TRSISPNSSTTNSQFSLQHN). Positions 264–290 (SLGGGVGGGLGGGGSLGLGGGGGGGGS) are enriched in gly residues. Polar residues predominate over residues 291–301 (CTPTSLQPQSS). One can recognise an SH3 domain in the interval 342-402 (HFVKLVVALY…PSNYVKPKAL (61 aa)). The region spanning 410-503 (WYVGDMSRQR…GLACRLKSSP (94 aa)) is the SH2 domain. Residues 526 to 779 (LMLMEELGSG…FRVLMDQLAL (254 aa)) form the Protein kinase domain. Residues 532–540 (LGSGQFGVV) and Lys-554 each bind ATP. Asp-647 functions as the Proton acceptor in the catalytic mechanism. Tyr-677 carries the phosphotyrosine; by autocatalysis modification.

It belongs to the protein kinase superfamily. Tyr protein kinase family. TEC subfamily. It depends on Zn(2+) as a cofactor. Ring canals in the egg chambers and imaginal disks of third-instar larvae.

It carries out the reaction L-tyrosyl-[protein] + ATP = O-phospho-L-tyrosyl-[protein] + ADP + H(+). In terms of biological role, required for proper ring canal development. Also required for the development of male genitalia and for adult survival. This Drosophila melanogaster (Fruit fly) protein is Tyrosine-protein kinase Btk.